The primary structure comprises 382 residues: D-galactonate dehydratase (382 aa).

D183 is a binding site for Mg(2+). H185 (proton donor) is an active-site residue. Mg(2+) is bound by residues E209 and E235. The active-site Proton acceptor is the H285.

It belongs to the mandelate racemase/muconate lactonizing enzyme family. GalD subfamily. Mg(2+) is required as a cofactor.

It catalyses the reaction D-galactonate = 2-dehydro-3-deoxy-D-galactonate + H2O. The protein operates within carbohydrate acid metabolism; D-galactonate degradation; D-glyceraldehyde 3-phosphate and pyruvate from D-galactonate: step 1/3. Its function is as follows. Catalyzes the dehydration of D-galactonate to 2-keto-3-deoxy-D-galactonate. The protein is D-galactonate dehydratase of Klebsiella pneumoniae (strain 342).